Consider the following 2211-residue polypeptide: Norsolorinic acid synthase stcA (2211 aa).

The tract at residues Phe11 to His251 is starter unit:ACP transacylase (SAT) domain. The disordered stretch occupies residues Pro358–Ser378. Over residues Thr368–Ser378 the composition is skewed to basic and acidic residues. The Ketosynthase family 3 (KS3) domain maps to Arg380 to Asp812. Catalysis depends on for beta-ketoacyl synthase activity residues Cys552, His687, and His730. A malonyl-CoA:ACP transacylase (MAT) domain region spans residues Ile912–Asp1201. The active-site For acyl/malonyl transferase activity is the Ser1004. Residues Thr1289–Ala1316 form a disordered region. The interval His1327 to Gln1468 is N-terminal hotdog fold. In terms of domain architecture, PKS/mFAS DH spans His1327 to Arg1643. Residues Thr1340–Arg1643 are product template (PT) domain. His1359 serves as the catalytic Proton acceptor; for dehydratase activity. A C-terminal hotdog fold region spans residues Phe1495–Arg1643. Asp1555 (proton donor; for dehydratase activity) is an active-site residue. Residues Arg1655 to Ala1706 are disordered. 2 stretches are compositionally biased toward polar residues: residues Gly1658–Pro1668 and Lys1676–His1685. Carrier domains lie at Arg1712–Ala1791 and Asp1839–Ser1915. An O-(pantetheine 4'-phosphoryl)serine mark is found at Ser1749 and Ser1873. Positions Gly1912–Ser1926 are enriched in low complexity. Positions Gly1912–Arg1947 are disordered. A compositionally biased stretch (polar residues) spans Ile1934 to Asp1945. A thioesterase/Claisen cyclase (TE/CLC) domain region spans residues Ile1969 to Leu2205. Ser2039 (for thioesterase activity) is an active-site residue.

It depends on pantetheine 4'-phosphate as a cofactor.

It carries out the reaction hexanoyl-[ACP] + 7 malonyl-CoA + 6 H(+) = noranthrone + holo-[ACP] + 7 CO2 + 7 CoA + 2 H2O. Its pathway is mycotoxin biosynthesis; sterigmatocystin biosynthesis. Functionally, non-reducing polyketide synthase; part of the gene cluster that mediates the biosynthesis of sterigmatocystin (ST), a polyketide-derived furanocoumarin which is part of the most toxic and carcinogenic compounds among the known mycotoxins. The first step in the biosynthesis of sterigmatocystin is the production of hexanoate by the fatty acid synthase (FAS) units stcJ and stcK. The polyketide backbone is assembled by the non-reducing polyketide synthase stcA by condensation of the starter hexanoyl-CoA and 7 malonyl-CoA extender units followed by cyclization and release of norsolorinic acid. Norsolorinic acid is the first stable intermediate in the biosynthesis of sterigmatocystin and is converted into averantin (AVN) by the ketoreductase stcE which reduces the hexanoate ketone to an alcohol. Averantin is then oxidized into 5'-hydroxyaverantin (HAVN) by the cytochrome P450 monooxygenase stcF. 5'-hydroxyaverantin is further converted to 5'-oxyaverantin (OAVN) by the 5'-hydroxyaverantin dehydrogenase stcG. The next step is the conversion of OAVN into averufin (AVF) which is catalyzed by a yet to be identified enzyme. The cytochrome P450 monooxygenase stcB and the flavin-binding monooxygenase stcW are both required for the conversion of averufin to 1-hydroxyversicolorone. The esterase stcI probably catalyzes the formation of versiconal hemiacetal acetate from 1-hydroxyversicolorone. The oxydoreductase stcN then probably catalyzes the biosynthetic step from versiconal to versicolorin B (VERB). The next step is performed by the versicolorin B desaturase stcL to produce versicolorin A (VERA). The ketoreductase stcU and the cytochrome P450 monooxygenase stcS are involved in the conversion of versicolorin A to demethylsterigmatocystin. The Baeyer-Villiger oxidas stcQ and the reductase stcR might be involved in the biosynthetic step from versicolorin A to demethylsterigmatocystin. The final step in the biosynthesis of sterigmatocystin is the methylation of demethylsterigmatocystin catalyzed by the methyltransferase stcP. The protein is Norsolorinic acid synthase stcA of Emericella nidulans (strain FGSC A4 / ATCC 38163 / CBS 112.46 / NRRL 194 / M139) (Aspergillus nidulans).